A 589-amino-acid polypeptide reads, in one-letter code: Guanylate-binding protein 1 (589 aa).

Positions 1-309 (MASEIHMSEP…SAICSGELPC (309 aa)) are GTPase domain (Globular). In terms of domain architecture, GB1/RHD3-type G spans 35 to 276 (TQPVVVVAIV…FTSYIFSYSG (242 aa)). Residues 47–53 (YRTGKSY), 67–69 (LGS), and 97–101 (DTEGL) contribute to the GTP site. At Ser156 the chain carries Phosphoserine. Cys586 is subject to Cysteine methyl ester. The S-farnesyl cysteine moiety is linked to residue Cys586. A lipid anchor (S-geranylgeranyl cysteine; partial) is attached at Cys586. Thr587 carries the phosphothreonine modification. The propeptide at 587–589 (TIL) is removed in mature form.

This sequence belongs to the TRAFAC class dynamin-like GTPase superfamily. GB1/RHD3 GTPase family. GB1 subfamily. Homodimer; homodimerization occurs upon GTP-binding and is required for the second hydrolysis step from GDP to GMP. Undergoes conformational changes and oligomerization upon GTP-binding and hydrolysis. Heterodimer with other family members, including GBP2, GBP3, GBP4 and GBP5. Dimerization regulates subcellular location to membranous structures. Interacts with SQSTM1. Interacts (when phosphorylated) with 14-3-3 protein sigma (SFN); leading to GBP1 retention in the cytosol and inactivation. Isoprenylation of mouse GBP1 is incomplete. It persistently exists in the cell as a mixture of C20-modified and (more predominantly) unmodified form. Isoprenylation is required for proper subcellular location. In terms of processing, phosphorylated at Ser-156 by PIM1 in absence of infection, inhibits GBP1: phosphorylation promotes interaction with 14-3-3 protein sigma (SFN), leading to GBP1 retention in the cytosol. Dephosphorylated in response to infection, liberating GBP1.

The protein localises to the cytoplasmic vesicle membrane. The protein resides in the golgi apparatus membrane. Its subcellular location is the cell membrane. It localises to the cytoplasm. It is found in the cytosol. The protein localises to the secreted. The enzyme catalyses GTP + H2O = GDP + phosphate + H(+). It catalyses the reaction GDP + H2O = GMP + phosphate + H(+). Interferon (IFN)-inducible GTPase that plays important roles in innate immunity against a diverse range of bacterial, viral and protozoan pathogens. Hydrolyzes GTP to GMP in two consecutive cleavage reactions: GTP is first hydrolyzed to GDP and then to GMP in a processive manner. Following infection, recruited to the pathogen-containing vacuoles or vacuole-escaped bacteria and promotes both inflammasome assembly and autophagy. Acts as a positive regulator of inflammasome assembly by facilitating the detection of inflammasome ligands from pathogens. Involved in the lysis of pathogen-containing vacuoles, releasing pathogens into the cytosol. Following pathogen release in the cytosol, forms a protein coat in a GTPase-dependent manner that encapsulates pathogens and promotes the detection of ligands by pattern recognition receptors. Plays a key role in inflammasome assembly in response to infection by Gram-negative bacteria: following pathogen release in the cytosol, forms a protein coat that encapsulates Gram-negative bacteria and directly binds to lipopolysaccharide (LPS), disrupting the O-antigen barrier and unmasking lipid A that is that detected by the non-canonical inflammasome effector CASP4/CASP11. Also promotes recruitment of proteins that mediate bacterial cytolysis, leading to release double-stranded DNA (dsDNA) that activates the AIM2 inflammasome. Involved in autophagy by regulating bacteriolytic peptide generation via its interaction with ubiquitin-binding protein SQSTM1, which delivers monoubiquitinated proteins to autolysosomes for the generation of bacteriolytic peptides. Confers protection to several pathogens, including the bacterial pathogens L.monocytogenes and M.bovis BCG as well as the protozoan pathogen T.gondii. Exhibits antiviral activity against influenza virus. The sequence is that of Guanylate-binding protein 1 (Gbp1) from Mus musculus (Mouse).